Here is a 387-residue protein sequence, read N- to C-terminus: Large ribosomal subunit protein uL3 (387 aa).

This sequence belongs to the universal ribosomal protein uL3 family.

The protein resides in the cytoplasm. This Kluyveromyces lactis (strain ATCC 8585 / CBS 2359 / DSM 70799 / NBRC 1267 / NRRL Y-1140 / WM37) (Yeast) protein is Large ribosomal subunit protein uL3 (RPL3).